The chain runs to 326 residues: NADH-specific methylglyoxal reductase (326 aa).

NAD(+) contacts are provided by residues threonine 20 to tryptophan 21 and aspartate 54. Tyrosine 59 functions as the Proton donor in the catalytic mechanism. Residues glutamine 189, tyrosine 217–glutamine 222, glycine 291, and glutamine 297 each bind NAD(+).

This sequence belongs to the aldo/keto reductase family. Aldo/keto reductase 11 subfamily. In terms of assembly, monomer.

The catalysed reaction is hydroxyacetone + NAD(+) = methylglyoxal + NADH + H(+). Functionally, catalyzes the NADH-dependent reduction of methylglyoxal (2-oxopropanal) in vitro. It is not known if this activity has physiological significance. Cannot use NADPH as a cosubstrate. Seems to play some role in intestinal colonization. The protein is NADH-specific methylglyoxal reductase (ydjG) of Escherichia coli (strain K12).